Reading from the N-terminus, the 702-residue chain is Lipase maturation factor 2 (702 aa).

Helical transmembrane passes span 10 to 30 (LFLQ…YTQI), 75 to 95 (AQGL…ALLL), 102 to 122 (FIYL…QVFL), 123 to 143 (YFQW…VAPL), 164 to 184 (DLPF…SGVV), 226 to 246 (LSVV…FAPI), 259 to 279 (LLQI…LTLV), 316 to 336 (LMLE…YFGL), 363 to 383 (VTLP…LIAL), and 396 to 416 (FFAG…FLIS). Asn-488 carries N-linked (GlcNAc...) asparagine glycosylation. Residues 628-648 (QLSPLEPSILLWGLLGAVVAI) form a helical membrane-spanning segment. A disordered region spans residues 660-702 (LQSSKQTREEKRKQAPKKDSRAVSEQTAPNSNSNGSWAPRRKK). Residues 665 to 681 (QTREEKRKQAPKKDSRA) show a composition bias toward basic and acidic residues. Polar residues predominate over residues 682–695 (VSEQTAPNSNSNGS).

Belongs to the lipase maturation factor family.

The protein resides in the endoplasmic reticulum membrane. Functionally, involved in the maturation of specific proteins in the endoplasmic reticulum. May be required for maturation and transport of active lipoprotein lipase (LPL) through the secretory pathway. The protein is Lipase maturation factor 2 (Lmf2) of Rattus norvegicus (Rat).